A 404-amino-acid polypeptide reads, in one-letter code: Phosphopentomutase (404 aa).

Mn(2+) contacts are provided by Asp-10, Asp-303, His-308, Asp-344, His-345, and His-356.

The protein belongs to the phosphopentomutase family. The cofactor is Mn(2+).

The protein resides in the cytoplasm. The enzyme catalyses 2-deoxy-alpha-D-ribose 1-phosphate = 2-deoxy-D-ribose 5-phosphate. It carries out the reaction alpha-D-ribose 1-phosphate = D-ribose 5-phosphate. Its pathway is carbohydrate degradation; 2-deoxy-D-ribose 1-phosphate degradation; D-glyceraldehyde 3-phosphate and acetaldehyde from 2-deoxy-alpha-D-ribose 1-phosphate: step 1/2. Functionally, isomerase that catalyzes the conversion of deoxy-ribose 1-phosphate (dRib-1-P) and ribose 1-phosphate (Rib-1-P) to deoxy-ribose 5-phosphate (dRib-5-P) and ribose 5-phosphate (Rib-5-P), respectively. In Shewanella sp. (strain MR-4), this protein is Phosphopentomutase.